We begin with the raw amino-acid sequence, 380 residues long: Alkanesulfonate monooxygenase (380 aa).

This sequence belongs to the SsuD family. Homotetramer.

It catalyses the reaction an alkanesulfonate + FMNH2 + O2 = an aldehyde + FMN + sulfite + H2O + 2 H(+). Functionally, catalyzes the desulfonation of aliphatic sulfonates. In Pectobacterium carotovorum subsp. carotovorum (strain PC1), this protein is Alkanesulfonate monooxygenase.